The sequence spans 65 residues: Large ribosomal subunit protein bL35 (65 aa).

This sequence belongs to the bacterial ribosomal protein bL35 family.

This is Large ribosomal subunit protein bL35 from Karelsulcia muelleri (strain GWSS) (Sulcia muelleri).